A 356-amino-acid polypeptide reads, in one-letter code: Aromatic dipeptide epimerase (356 aa).

Residues Thr-136 and 161 to 163 (KVK) each bind substrate. Positions 191, 219, and 244 each coordinate Mg(2+). Substrate-binding positions include Lys-268 and 320–322 (DLD).

This sequence belongs to the mandelate racemase/muconate lactonizing enzyme family. Mg(2+) is required as a cofactor.

Its function is as follows. Has epimerase activity with a variety of hydrophobic dipeptides (in vitro). Enzyme activity is highest with L-Phe-L-Tyr, but is still relatively low, suggesting that L-Phe-L-Tyr is not the physiological substrate. The protein is Aromatic dipeptide epimerase of Herpetosiphon aurantiacus (strain ATCC 23779 / DSM 785 / 114-95).